Reading from the N-terminus, the 290-residue chain is Pyridoxal kinase PdxY (290 aa).

Substrate is bound by residues serine 12 and 47–48; that span reads TQ. ATP-binding positions include aspartate 114, glutamate 151, lysine 184, and 211 to 214; that span reads RPLL. Aspartate 225 contributes to the substrate binding site.

The protein belongs to the pyridoxine kinase family. PdxY subfamily. In terms of assembly, homodimer. Requires Mg(2+) as cofactor.

The enzyme catalyses pyridoxal + ATP = pyridoxal 5'-phosphate + ADP + H(+). The protein operates within cofactor metabolism; pyridoxal 5'-phosphate salvage; pyridoxal 5'-phosphate from pyridoxal: step 1/1. In terms of biological role, pyridoxal kinase involved in the salvage pathway of pyridoxal 5'-phosphate (PLP). Catalyzes the phosphorylation of pyridoxal to PLP. In Pseudomonas putida (strain ATCC 47054 / DSM 6125 / CFBP 8728 / NCIMB 11950 / KT2440), this protein is Pyridoxal kinase PdxY.